Reading from the N-terminus, the 431-residue chain is tRNA(Ile)-lysidine synthase (431 aa).

26–31 (SGGIDS) is an ATP binding site.

This sequence belongs to the tRNA(Ile)-lysidine synthase family.

The protein localises to the cytoplasm. It catalyses the reaction cytidine(34) in tRNA(Ile2) + L-lysine + ATP = lysidine(34) in tRNA(Ile2) + AMP + diphosphate + H(+). Functionally, ligates lysine onto the cytidine present at position 34 of the AUA codon-specific tRNA(Ile) that contains the anticodon CAU, in an ATP-dependent manner. Cytidine is converted to lysidine, thus changing the amino acid specificity of the tRNA from methionine to isoleucine. This Wolbachia sp. subsp. Brugia malayi (strain TRS) protein is tRNA(Ile)-lysidine synthase.